The following is a 337-amino-acid chain: Heat-inducible transcription repressor HrcA (337 aa).

This sequence belongs to the HrcA family.

Functionally, negative regulator of class I heat shock genes (grpE-dnaK-dnaJ and groELS operons). Prevents heat-shock induction of these operons. This Pseudarthrobacter chlorophenolicus (strain ATCC 700700 / DSM 12829 / CIP 107037 / JCM 12360 / KCTC 9906 / NCIMB 13794 / A6) (Arthrobacter chlorophenolicus) protein is Heat-inducible transcription repressor HrcA.